Here is a 1775-residue protein sequence, read N- to C-terminus: Stereocilin (1775 aa).

Positions 1–22 (MALSLWPLLLLLLLLLLLSFAV) are cleaved as a signal peptide. Asn65, Asn202, Asn297, Asn366, Asn427, Asn476, Asn540, Asn565, Asn656, Asn824, Asn916, Asn964, Asn1179, and Asn1274 each carry an N-linked (GlcNAc...) asparagine glycan.

The protein belongs to the stereocilin family.

It is found in the cell surface. It localises to the cell projection. The protein localises to the kinocilium. The protein resides in the stereocilium. Its function is as follows. Essential to the formation of horizontal top connectors between outer hair cell stereocilia. In Homo sapiens (Human), this protein is Stereocilin (STRC).